The following is a 367-amino-acid chain: Anhydro-N-acetylmuramic acid kinase (367 aa).

13-20 is a binding site for ATP; that stretch reads GTSMDGAD.

This sequence belongs to the anhydro-N-acetylmuramic acid kinase family.

The enzyme catalyses 1,6-anhydro-N-acetyl-beta-muramate + ATP + H2O = N-acetyl-D-muramate 6-phosphate + ADP + H(+). The protein operates within amino-sugar metabolism; 1,6-anhydro-N-acetylmuramate degradation. It participates in cell wall biogenesis; peptidoglycan recycling. Functionally, catalyzes the specific phosphorylation of 1,6-anhydro-N-acetylmuramic acid (anhMurNAc) with the simultaneous cleavage of the 1,6-anhydro ring, generating MurNAc-6-P. Is required for the utilization of anhMurNAc either imported from the medium or derived from its own cell wall murein, and thus plays a role in cell wall recycling. The sequence is that of Anhydro-N-acetylmuramic acid kinase from Neisseria meningitidis serogroup C / serotype 2a (strain ATCC 700532 / DSM 15464 / FAM18).